Here is a 406-residue protein sequence, read N- to C-terminus: Tryptophan synthase beta chain (406 aa).

The residue at position 97 (Lys-97) is an N6-(pyridoxal phosphate)lysine.

Belongs to the TrpB family. In terms of assembly, tetramer of two alpha and two beta chains. The cofactor is pyridoxal 5'-phosphate.

It catalyses the reaction (1S,2R)-1-C-(indol-3-yl)glycerol 3-phosphate + L-serine = D-glyceraldehyde 3-phosphate + L-tryptophan + H2O. It functions in the pathway amino-acid biosynthesis; L-tryptophan biosynthesis; L-tryptophan from chorismate: step 5/5. Functionally, the beta subunit is responsible for the synthesis of L-tryptophan from indole and L-serine. This chain is Tryptophan synthase beta chain, found in Lacticaseibacillus paracasei (strain ATCC 334 / BCRC 17002 / CCUG 31169 / CIP 107868 / KCTC 3260 / NRRL B-441) (Lactobacillus paracasei).